A 262-amino-acid chain; its full sequence is MWITQEITPYLRKEYTIEAKLLDVRSEHNILEIFKSKDFGEIAMLNCQLLFKNFLHIESELLAHMGGCTKKELKEVLIVDGFDLELAHQLFKYDTHIDFVQADEKILDSFISFFPHFHEVKNNKNFTHAKQLLDLDIKKYDLILCLQEPDIHKMDGLKRMLKEDGVFISVAKHPLLEHVSMQNALKNMGGVFSVAMPFVAPLRILSNKGYIYASFKTHPLKDLMTPKIEALTSMRYYNEDIHRAAFALPKNLQEVFKDNIKS.

Residues 1–249 form the PABS domain; the sequence is MWITQEITPY…DIHRAAFALP (249 aa). N29 contacts S-methyl-5'-thioadenosine. Spermidine is bound at residue D83. D155 functions as the Proton acceptor in the catalytic mechanism.

The protein belongs to the spermidine/spermine synthase family. In terms of assembly, homodimer or homotetramer.

It localises to the cytoplasm. The catalysed reaction is S-adenosyl 3-(methylsulfanyl)propylamine + putrescine = S-methyl-5'-thioadenosine + spermidine + H(+). The protein operates within amine and polyamine biosynthesis; spermidine biosynthesis; spermidine from putrescine: step 1/1. Its function is as follows. Catalyzes the irreversible transfer of a propylamine group from the amino donor S-adenosylmethioninamine (decarboxy-AdoMet) to putrescine (1,4-diaminobutane) to yield spermidine. The polypeptide is Polyamine aminopropyltransferase (Helicobacter pylori (strain HPAG1)).